A 320-amino-acid polypeptide reads, in one-letter code: ATP-dependent 6-phosphofructokinase (320 aa).

G12 lines the ATP pocket. ADP-binding positions include 22–26 and 55–60; these read RSVVR and RYSVSD. Residues 73 to 74 and 103 to 106 each bind ATP; these read RF and GDGS. D104 contributes to the Mg(2+) binding site. 126 to 128 is a substrate binding site; it reads TID. D128 functions as the Proton acceptor in the catalytic mechanism. R155 contributes to the ADP binding site. Residues R163 and 170–172 contribute to the substrate site; that span reads MGR. Residues 186-188 and 214-216 contribute to the ADP site; these read GCE and KKH. Residues E223, R244, and 250-253 contribute to the substrate site; that span reads HIQR.

It belongs to the phosphofructokinase type A (PFKA) family. ATP-dependent PFK group I subfamily. Prokaryotic clade 'B1' sub-subfamily. Homotetramer. Requires Mg(2+) as cofactor.

The protein localises to the cytoplasm. It carries out the reaction beta-D-fructose 6-phosphate + ATP = beta-D-fructose 1,6-bisphosphate + ADP + H(+). Its pathway is carbohydrate degradation; glycolysis; D-glyceraldehyde 3-phosphate and glycerone phosphate from D-glucose: step 3/4. Allosterically activated by ADP and other diphosphonucleosides, and allosterically inhibited by phosphoenolpyruvate. Its function is as follows. Catalyzes the phosphorylation of D-fructose 6-phosphate to fructose 1,6-bisphosphate by ATP, the first committing step of glycolysis. This Baumannia cicadellinicola subsp. Homalodisca coagulata protein is ATP-dependent 6-phosphofructokinase.